Here is a 2225-residue protein sequence, read N- to C-terminus: Genome polyprotein (2225 aa).

Short sequence motifs ((L)YPX(n)L motif) lie at residues 167 to 171 (YPHGL) and 200 to 205 (YPVWEL). The involved in P1-2A pentamerization stretch occupies residues 766 to 836 (MMSRIAAGDL…PRKMKGLFSQ (71 aa)). A helical transmembrane segment spans residues 1011–1031 (TVDIVNIVLCFVKSGILLYVI). The interval 1043–1070 (IGLLRVMNYADIGCSVISCGKVFSKMLE) is membrane-penetrating ability. A coiled-coil region spans residues 1127-1152 (KKKDVLNVLKDNQQRIERAIEEADNF). One can recognise an SF3 helicase domain in the interval 1204-1366 (HQKLKNLGSI…SFFQNPHNDM (163 aa)). 1230–1237 (GKRGGGKS) is a binding site for ATP. A helical transmembrane segment spans residues 1460–1480 (WVAVGAAVGILGVLVGGWFVY). Residue Tyr-1497 is modified to O-(5'-phospho-RNA)-tyrosine. A Peptidase C3 domain is found at 1512 to 1726 (DPVESQSTLE…VAKLVTQEMF (215 aa)). Active-site for protease 3C activity residues include His-1561, Asp-1601, and Cys-1689. One can recognise a RdRp catalytic domain in the interval 1974–2095 (DVGLDLDFSA…VFSRDIQIDN (122 aa)).

This sequence belongs to the picornaviridae polyprotein family. Homodimer. Homomultimer; probably interacts with membranes in a multimeric form. Seems to assemble into amyloid-like fibers. As to quaternary structure, homodimer. Monomer. Interacts with protein 3CD. In terms of assembly, interacts with host ACBD3. Interacts with protein 3AB. As to quaternary structure, interacts with human MAVS. In terms of assembly, homodimer; disulfide-linked. Homopentamer. Homooligomer. As to quaternary structure, interacts with capsid protein VP2. Interacts with capsid protein VP3. In terms of assembly, interacts with capsid protein VP1. Interacts with capsid protein VP3. Interacts with capsid protein VP1. Interacts with capsid protein VP2. Post-translationally, specific enzymatic cleavages by viral protease in vivo yield a variety of precursors and mature proteins. Polyprotein processing intermediates are produced, such as P1-2A which is a functional precursor of the structural proteins, VP0 which is a VP4-VP2 precursor, VP1-2A precursor, 3ABC precursor which is a stable and catalytically active precursor of 3A, 3B and 3C proteins, 3AB and 3CD precursors. The assembly signal 2A is removed from VP1-2A by a host protease, possibly host Cathepsin L. This cleavage occurs over a region of 3 amino-acids probably generating VP1 proteins with heterogeneous C-termini. During virion maturation, immature virions are rendered infectious following cleavage of VP0 into VP4 and VP2. This maturation seems to be an autocatalytic event triggered by the presence of RNA in the capsid and is followed by a conformational change of the particle. In terms of processing, the assembly signal 2A is removed from VP1-2A by a host protease, possibly host Cathepsin L in naked virions. This cleavage does not occur in enveloped virions. This cleavage occurs over a region of 3 amino-acids probably generating VP1 proteins with heterogeneous C-termini. Post-translationally, VPg is uridylylated prior to priming replication into VPg-pUpU. Unlike other picornaviruses, does not seem to be myristoylated.

Its subcellular location is the virion. The protein localises to the host endosome. The protein resides in the host multivesicular body. It is found in the host membrane. It localises to the host mitochondrion outer membrane. Its subcellular location is the host cytoplasm. The protein localises to the host cytoplasmic vesicle membrane. It catalyses the reaction RNA(n) + a ribonucleoside 5'-triphosphate = RNA(n+1) + diphosphate. It carries out the reaction a ribonucleoside 5'-triphosphate + H2O = a ribonucleoside 5'-diphosphate + phosphate + H(+). The catalysed reaction is Selective cleavage of Gln-|-Gly bond in the poliovirus polyprotein. In other picornavirus reactions Glu may be substituted for Gln, and Ser or Thr for Gly.. Its function is as follows. Capsid proteins VP1, VP2, and VP3 form a closed capsid enclosing the viral positive strand RNA genome. All these proteins contain a beta-sheet structure called beta-barrel jelly roll. Together they form an icosahedral capsid (T=3) composed of 60 copies of each VP1, VP2, and VP3, with a diameter of approximately 300 Angstroms. VP1 is situated at the 12 fivefold axes, whereas VP2 and VP3 are located at the quasi-sixfold axes. The naked capsid interacts with the host receptor HAVCR1 to provide virion attachment to and probably entry into the target cell. In terms of biological role, VP0 precursor is a component of the immature procapsids. Plays a role in the assembly of the 12 pentamers into an icosahedral structure. Has not been detected in mature virions, supposedly owing to its small size. Functionally, precursor component of immature procapsids that corresponds to an extended form of the structural protein VP1. After maturation, possibly by the host Cathepsin L, the assembly signal 2A is cleaved to give rise to the mature VP1 protein. Its function is as follows. Functions as a viroporin. Affects membrane integrity and causes an increase in membrane permeability. Involved in host intracellular membrane rearrangements probably to give rise to the viral factories. Does not disrupt calcium homeostasis or glycoprotein trafficking. Antagonizes the innate immune response of the host by suppressing IFN-beta synthesis, which it achieves by interfering with the RIG-I/IFIH1 pathway. In terms of biological role, affects membrane integrity and causes an increase in membrane permeability. Associates with and induces structural rearrangements of intracellular membranes. Displays RNA-binding activity. Functionally, the precursor 3ABC is targeted to the mitochondrial membrane where protease 3C activity cleaves and inhibits the host antiviral protein MAVS, thereby disrupting activation of IRF3 through the IFIH1/MDA5 pathway. In vivo, the protease activity of 3ABC precursor is more efficient in cleaving the 2BC precursor than that of protein 3C. The 3ABC precursor may therefore play a role in the proteolytic processing of the polyprotein. Possible viroporin. Its function is as follows. Interacts with the 3CD precursor and with RNA structures found at both the 5'- and 3'-termini of the viral genome. Since the 3AB precursor contains the hydrophobic domain 3A, it probably anchors the whole viral replicase complex to intracellular membranes on which viral RNA synthesis occurs. In terms of biological role, may serve as membrane anchor to the 3AB and 3ABC precursors via its hydrophobic domain. May interact with RNA. Acts as a primer for viral RNA replication and remains covalently bound to viral genomic RNA. VPg is uridylylated prior to priming replication into VPg-pUpU. The VPg-pUpU is then used as primer on the genomic RNA poly(A) by the RNA-dependent RNA polymerase to replicate the viral genome. Functionally, cysteine protease that generates mature viral proteins from the precursor polyprotein. In addition to its proteolytic activity, it binds to viral RNA, and thus influences viral genome replication. RNA and substrate bind cooperatively to the protease. Cleaves IKBKG/NEMO to impair innate immune signaling. Cleaves host PABPC1 which may participate in the switch of viral translation to RNA synthesis. Its function is as follows. Interacts with the 3AB precursor and with RNA structures found at both the 5'- and 3'-termini of the viral genome. Disrupts TLR3 signaling by degrading the host adapter protein TICAM1/TRIF. In terms of biological role, RNA-directed RNA polymerase 3D-POL replicates genomic and antigenomic RNA by recognizing replications specific signals. The chain is Genome polyprotein from Homo sapiens (Human).